The chain runs to 345 residues: N-acetyl-gamma-glutamyl-phosphate reductase (345 aa).

Cys149 is an active-site residue.

This sequence belongs to the NAGSA dehydrogenase family. Type 1 subfamily.

It is found in the cytoplasm. The enzyme catalyses N-acetyl-L-glutamate 5-semialdehyde + phosphate + NADP(+) = N-acetyl-L-glutamyl 5-phosphate + NADPH + H(+). Its pathway is amino-acid biosynthesis; L-arginine biosynthesis; N(2)-acetyl-L-ornithine from L-glutamate: step 3/4. Its function is as follows. Catalyzes the NADPH-dependent reduction of N-acetyl-5-glutamyl phosphate to yield N-acetyl-L-glutamate 5-semialdehyde. In Geobacillus sp. (strain WCH70), this protein is N-acetyl-gamma-glutamyl-phosphate reductase.